Reading from the N-terminus, the 105-residue chain is Guanidinium exporter (105 aa).

The helical transmembrane segment at 1 to 21 (MSWIILVIAGLLEVVWAVGLK) threads the bilayer. Topologically, residues 22 to 28 (YTHGFSR) are cytoplasmic. The chain crosses the membrane as a helical span at residues 29-49 (LTPSVITVTAMIVSLALLAWA). Over 50–57 (MKSLPVGT) the chain is Periplasmic. The chain crosses the membrane as a helical span at residues 58–78 (AYAVWTGIGAVGAAITGIVLL). Residues 79–81 (GES) are Cytoplasmic-facing. The chain crosses the membrane as a helical span at residues 82–102 (ANPMRLASLALIVLGIIGLKL). The Periplasmic segment spans residues 103-105 (STH).

The protein belongs to the drug/metabolite transporter (DMT) superfamily. Small multidrug resistance (SMR) (TC 2.A.7.1) family. Gdx/SugE subfamily.

It localises to the cell inner membrane. Functionally, guanidinium ion exporter. Couples guanidinium export to the proton motive force, exchanging one guanidinium ion for two protons. The sequence is that of Guanidinium exporter from Escherichia coli O6:H1 (strain CFT073 / ATCC 700928 / UPEC).